Consider the following 449-residue polypeptide: Glutamyl-tRNA(Gln) amidotransferase subunit A (449 aa).

Catalysis depends on charge relay system residues K51 and S126. A disordered region spans residues 103–128 (STTESSAHGKTLNPVDSSRVPGGSSG). Residues 119–128 (SSRVPGGSSG) are compositionally biased toward low complexity. S150 serves as the catalytic Acyl-ester intermediate.

Belongs to the amidase family. GatA subfamily. Heterotrimer of A, B and C subunits.

The catalysed reaction is L-glutamyl-tRNA(Gln) + L-glutamine + ATP + H2O = L-glutaminyl-tRNA(Gln) + L-glutamate + ADP + phosphate + H(+). Allows the formation of correctly charged Gln-tRNA(Gln) through the transamidation of misacylated Glu-tRNA(Gln) in organisms which lack glutaminyl-tRNA synthetase. The reaction takes place in the presence of glutamine and ATP through an activated gamma-phospho-Glu-tRNA(Gln). This chain is Glutamyl-tRNA(Gln) amidotransferase subunit A, found in Wolinella succinogenes (strain ATCC 29543 / DSM 1740 / CCUG 13145 / JCM 31913 / LMG 7466 / NCTC 11488 / FDC 602W) (Vibrio succinogenes).